The chain runs to 192 residues: Erythropoietin (192 aa).

The signal sequence occupies residues 1–26; the sequence is MGVPERPTLLLLLSLLLIPLGLPVLC. Cysteines 33 and 187 form a disulfide. 3 N-linked (GlcNAc...) asparagine glycosylation sites follow: N50, N64, and N109.

Belongs to the EPO/TPO family. Produced by kidney or liver of adult mammals and by liver of fetal or neonatal mammals.

The protein localises to the secreted. Functionally, hormone involved in the regulation of erythrocyte proliferation and differentiation and the maintenance of a physiological level of circulating erythrocyte mass. Binds to EPOR leading to EPOR dimerization and JAK2 activation thereby activating specific downstream effectors, including STAT1 and STAT3. The sequence is that of Erythropoietin (Epo) from Rattus norvegicus (Rat).